A 1087-amino-acid chain; its full sequence is Ubiquitin-associated protein 2-like (1087 aa).

Met-1 is modified (N-acetylmethionine). The disordered stretch occupies residues Met-1–Ala-33. Residues Asp-49 to Gly-89 form the UBA domain. The interval Asp-92–Thr-234 is disordered. Basic and acidic residues predominate over residues Glu-118–Arg-132. Basic residues predominate over residues Arg-133–Ser-145. Asymmetric dimethylarginine is present on residues Arg-187 and Arg-190. Positions Asn-213–Gly-226 are enriched in low complexity. Phosphoserine occurs at positions 356 and 360. A compositionally biased stretch (low complexity) spans Ala-377–Ser-389. The interval Ala-377 to Lys-420 is disordered. Residues Trp-390–Leu-401 are compositionally biased toward polar residues. 2 positions are modified to phosphoserine: Ser-410 and Ser-416. Thr-425 bears the Phosphothreonine mark. Residues Ser-439, Ser-454, Ser-467, Ser-470, Ser-471, and Ser-477 each carry the phosphoserine modification. 3 disordered regions span residues Pro-440 to Ser-493, Ser-530 to Leu-656, and Thr-669 to Gly-794. Low complexity-rich tracts occupy residues Gln-474–Leu-485 and Ser-534–Ser-569. Residues Gly-570–Leu-656 show a composition bias toward polar residues. Ser-604, Ser-605, Ser-608, and Ser-609 each carry phosphoserine. Low complexity predominate over residues Thr-688–Ser-784. Phosphoserine occurs at positions 852 and 859. A disordered region spans residues Phe-865–Ala-901. Positions Pro-873–Thr-896 are enriched in low complexity. An omega-N-methylarginine mark is found at Ser-962 and Val-969. An N6-acetyllysine mark is found at Val-969 and Thr-976. The disordered stretch occupies residues Gln-1040–Asn-1087. Residues Gln-1053–Ser-1067 show a composition bias toward low complexity. Polar residues predominate over residues Ile-1068 to Asn-1087.

As to quaternary structure, interacts with BMI1. Part of a complex consisting of UBAP2L, BMI1 and RNF2. Interacts with G3BP1 (via NTF2 domain); promoting stress granule formation. In terms of processing, acetylated. As to expression, ubiquitous.

The protein resides in the nucleus. It is found in the chromosome. The protein localises to the cytoplasm. It localises to the stress granule. Functionally, recruits the ubiquitination machinery to RNA polymerase II for polyubiquitination, removal and degradation, when the transcription-coupled nucleotide excision repair (TC-NER) machinery fails to resolve DNA damage. Plays an important role in the activity of long-term repopulating hematopoietic stem cells (LT-HSCs). Is a regulator of stress granule assembly, required for their efficient formation. Required for proper brain development and neocortex lamination. The sequence is that of Ubiquitin-associated protein 2-like from Homo sapiens (Human).